Reading from the N-terminus, the 198-residue chain is Probable GTP-binding protein EngB (198 aa).

The 175-residue stretch at 21–195 (NFSEVAFLGR…EDIIINQTLG (175 aa)) folds into the EngB-type G domain. GTP-binding positions include 29-36 (GRSNVGKS), 56-60 (GKTQL), 81-84 (DLPG), 151-154 (TKCD), and 174-176 (VSN). S36 and T58 together coordinate Mg(2+).

This sequence belongs to the TRAFAC class TrmE-Era-EngA-EngB-Septin-like GTPase superfamily. EngB GTPase family. Mg(2+) is required as a cofactor.

In terms of biological role, necessary for normal cell division and for the maintenance of normal septation. The polypeptide is Probable GTP-binding protein EngB (Campylobacter jejuni subsp. jejuni serotype O:2 (strain ATCC 700819 / NCTC 11168)).